The sequence spans 285 residues: Bis(5'-nucleosyl)-tetraphosphatase, symmetrical (285 aa).

Belongs to the Ap4A hydrolase family.

It catalyses the reaction P(1),P(4)-bis(5'-adenosyl) tetraphosphate + H2O = 2 ADP + 2 H(+). Its function is as follows. Hydrolyzes diadenosine 5',5'''-P1,P4-tetraphosphate to yield ADP. The protein is Bis(5'-nucleosyl)-tetraphosphatase, symmetrical of Colwellia psychrerythraea (strain 34H / ATCC BAA-681) (Vibrio psychroerythus).